Consider the following 389-residue polypeptide: Cytochrome oxidase assembly protein SHY1 (389 aa).

At 1–71 (MSLLGARSTY…SRRERSFGKK (71 aa)) the chain is on the mitochondrial matrix side. The helical transmembrane segment at 72–92 (IVLGLMFAMPIISFYLGTWQV) threads the bilayer. Topologically, residues 93 to 341 (RRLKWKTKLI…KPTIDLKNNH (249 aa)) are mitochondrial intermembrane. The interval 292 to 311 (GTQAVDNNTSKPRSRQEMPT) is disordered. The helical transmembrane segment at 342–362 (LQYLVTWYGLSFLSTIFLIVA) threads the bilayer. Over 363–389 (LRKAKRGGVVSQDQLMKEKLKHSRKYM) the chain is Mitochondrial matrix.

Belongs to the SURF1 family. As to quaternary structure, interacts with COA1, COX14 and MSS51.

It is found in the mitochondrion inner membrane. Required for efficient assembly of cytochrome c oxidase in the mitochondrial inner membrane. Involved in a step that couples MSS51-COX14-dependent regulation of COX1 translation to early steps of cytochrome c oxidase assembly. The protein is Cytochrome oxidase assembly protein SHY1 (SHY1) of Saccharomyces cerevisiae (strain ATCC 204508 / S288c) (Baker's yeast).